The following is a 494-amino-acid chain: NADPH:adrenodoxin oxidoreductase, mitochondrial (494 aa).

The transit peptide at 1 to 34 (MAPRCWHWWRWSAWSGLRPSPSRSTPTPGFCQKF) directs the protein to the mitochondrion. FAD contacts are provided by A51, E72, L80, and V116. NADP(+)-binding positions include 187 to 190 (QGNV), 231 to 232 (RR), and E243. Position 313 is a phosphoserine (S313). FAD is bound by residues W401 and 408–410 (GVI). NADP(+) is bound at residue G408.

This sequence belongs to the ferredoxin--NADP reductase type 1 family. Monomer. Interacts directly with FDX1. FAD serves as cofactor. Expressed in the adrenal, testis and ovary and to a lesser extent in the liver and kidney.

It localises to the mitochondrion inner membrane. The enzyme catalyses 2 reduced [adrenodoxin] + NADP(+) + H(+) = 2 oxidized [adrenodoxin] + NADPH. It carries out the reaction 2 reduced [2Fe-2S]-[ferredoxin] + NADP(+) + H(+) = 2 oxidized [2Fe-2S]-[ferredoxin] + NADPH. It participates in steroid metabolism; cholesterol metabolism. Serves as the first electron transfer protein in all the mitochondrial P450 systems including cholesterol side chain cleavage in all steroidogenic tissues, steroid 11-beta hydroxylation in the adrenal cortex, 25-OH-vitamin D3-24 hydroxylation in the kidney, and sterol C-27 hydroxylation in the liver. Also acts as a ferredoxin--NADP(+) reductase essential for coenzyme Q biosynthesis: together with FDX2, transfers the electrons required for the hydroxylation reaction performed by COQ6. This chain is NADPH:adrenodoxin oxidoreductase, mitochondrial (Fdxr), found in Mus musculus (Mouse).